A 1158-amino-acid chain; its full sequence is cGMP-specific 3',5'-cyclic phosphodiesterase (1158 aa).

2 disordered regions span residues M1–D137 and S195–E216. Over residues A30–N71 the composition is skewed to low complexity. Polar residues predominate over residues G108–Q135. The segment covering S202 to P215 has biased composition (low complexity). 2 consecutive GAF domains span residues D242–I394 and N426–I640. The region spanning S670–V993 is the PDEase domain. Residue H746 is the Proton donor of the active site. H750, H786, D787, and D897 together coordinate a divalent metal cation. 2 disordered regions span residues Q1034–L1065 and V1097–L1158. Basic and acidic residues predominate over residues G1041–R1052. Over residues A1114–A1130 the composition is skewed to low complexity. Over residues S1148–L1158 the composition is skewed to basic residues. Cysteine methyl ester is present on C1155. The S-farnesyl cysteine moiety is linked to residue C1155. The propeptide at A1156 to L1158 is removed in mature form.

This sequence belongs to the cyclic nucleotide phosphodiesterase family. As to quaternary structure, interacts with PrBP. It depends on a divalent metal cation as a cofactor.

Its subcellular location is the cell membrane. It catalyses the reaction 3',5'-cyclic GMP + H2O = GMP + H(+). Functionally, has a role regulating cGMP transport in Malpighian tubule principal cells. In Drosophila ananassae (Fruit fly), this protein is cGMP-specific 3',5'-cyclic phosphodiesterase.